We begin with the raw amino-acid sequence, 466 residues long: Bifunctional protein GlmU (466 aa).

The pyrophosphorylase stretch occupies residues 1–233; that stretch reads MLHKSVLGLV…ADEAMGANDR (233 aa). Residues 11-14, Lys25, Gln79, and 84-85 contribute to the UDP-N-acetyl-alpha-D-glucosamine site; these read LAAG and GT. Asp108 serves as a coordination point for Mg(2+). Residues Gly143, Glu158, Asn173, and Asn231 each contribute to the UDP-N-acetyl-alpha-D-glucosamine site. Asn231 contributes to the Mg(2+) binding site. Residues 234-254 form a linker region; that stretch reads AQLAALEAVYRQRKVQELFAQ. Residues 255–466 form an N-acetyltransferase region; that stretch reads GVTLIDPNRI…QKKKEHKNDA (212 aa). Arg337 and Lys355 together coordinate UDP-N-acetyl-alpha-D-glucosamine. The active-site Proton acceptor is the His367. UDP-N-acetyl-alpha-D-glucosamine is bound by residues Tyr370 and Asn381. Residues Ala384, 390 to 391, Ser409, Ala427, and Arg444 contribute to the acetyl-CoA site; that span reads NY.

It in the N-terminal section; belongs to the N-acetylglucosamine-1-phosphate uridyltransferase family. This sequence in the C-terminal section; belongs to the transferase hexapeptide repeat family. As to quaternary structure, homotrimer. Mg(2+) serves as cofactor.

It is found in the cytoplasm. The catalysed reaction is alpha-D-glucosamine 1-phosphate + acetyl-CoA = N-acetyl-alpha-D-glucosamine 1-phosphate + CoA + H(+). The enzyme catalyses N-acetyl-alpha-D-glucosamine 1-phosphate + UTP + H(+) = UDP-N-acetyl-alpha-D-glucosamine + diphosphate. It participates in nucleotide-sugar biosynthesis; UDP-N-acetyl-alpha-D-glucosamine biosynthesis; N-acetyl-alpha-D-glucosamine 1-phosphate from alpha-D-glucosamine 6-phosphate (route II): step 2/2. Its pathway is nucleotide-sugar biosynthesis; UDP-N-acetyl-alpha-D-glucosamine biosynthesis; UDP-N-acetyl-alpha-D-glucosamine from N-acetyl-alpha-D-glucosamine 1-phosphate: step 1/1. It functions in the pathway bacterial outer membrane biogenesis; LPS lipid A biosynthesis. Catalyzes the last two sequential reactions in the de novo biosynthetic pathway for UDP-N-acetylglucosamine (UDP-GlcNAc). The C-terminal domain catalyzes the transfer of acetyl group from acetyl coenzyme A to glucosamine-1-phosphate (GlcN-1-P) to produce N-acetylglucosamine-1-phosphate (GlcNAc-1-P), which is converted into UDP-GlcNAc by the transfer of uridine 5-monophosphate (from uridine 5-triphosphate), a reaction catalyzed by the N-terminal domain. The polypeptide is Bifunctional protein GlmU (Dichelobacter nodosus (strain VCS1703A)).